The sequence spans 919 residues: Probable disease resistance protein At4g27220 (919 aa).

Coiled coils occupy residues 1-30 (MFRSNARALNRALERLKNVQTKVNEALKRS) and 74-95 (VEILEKVKRLEEQGQDLIKKIS). The 279-residue stretch at 121–399 (MLDKLKDCLK…AEGLLDGQHH (279 aa)) folds into the NB-ARC domain. 141–148 (GMGGVGKT) is a binding site for ATP. 8 LRR repeats span residues 447-468 (GEGFHSLVMAGRGLIEFPQDKF), 469-492 (VSSVQRVSLMANKLERLPNNVIEG), 494-516 (ETLVLLLQGNSHVKEVPNGFLQA), 519-540 (NLRILDLSGVRIRTLPDSFSNL), 542-564 (SLRSLVLRNCKKLRNLPSLESLV), 565-587 (KLQFLDLHESAIRELPRGLEALS), 588-610 (SLRYICVSNTYQLQSIPAGTILQ), and 611-635 (LSSLEVLDMAGSAYSWGIKGEEREG).

The protein belongs to the disease resistance NB-LRR family.

Its function is as follows. Probable disease resistance protein. The sequence is that of Probable disease resistance protein At4g27220 from Arabidopsis thaliana (Mouse-ear cress).